The sequence spans 156 residues: ATP synthase subunit b (156 aa).

A helical transmembrane segment spans residues 12–32 (VAFFIFVLFCMKFVWPPVIAA).

The protein belongs to the ATPase B chain family. F-type ATPases have 2 components, F(1) - the catalytic core - and F(0) - the membrane proton channel. F(1) has five subunits: alpha(3), beta(3), gamma(1), delta(1), epsilon(1). F(0) has three main subunits: a(1), b(2) and c(10-14). The alpha and beta chains form an alternating ring which encloses part of the gamma chain. F(1) is attached to F(0) by a central stalk formed by the gamma and epsilon chains, while a peripheral stalk is formed by the delta and b chains.

The protein resides in the cell inner membrane. Functionally, f(1)F(0) ATP synthase produces ATP from ADP in the presence of a proton or sodium gradient. F-type ATPases consist of two structural domains, F(1) containing the extramembraneous catalytic core and F(0) containing the membrane proton channel, linked together by a central stalk and a peripheral stalk. During catalysis, ATP synthesis in the catalytic domain of F(1) is coupled via a rotary mechanism of the central stalk subunits to proton translocation. In terms of biological role, component of the F(0) channel, it forms part of the peripheral stalk, linking F(1) to F(0). The sequence is that of ATP synthase subunit b from Pseudomonas paraeruginosa (strain DSM 24068 / PA7) (Pseudomonas aeruginosa (strain PA7)).